A 67-amino-acid chain; its full sequence is Conotoxin TsMMSK-011 (67 aa).

The N-terminal stretch at 1–20 (MMSKLGVLLTICLLLFPLTA) is a signal peptide. A propeptide spanning residues 21–50 (VQLDGDQPADLPALRTQDIATDHSPWFDPV) is cleaved from the precursor. 3 cysteine pairs are disulfide-bonded: Cys53–Cys65, Cys54–Cys61, and Cys58–Cys64. Pro63 bears the 4-hydroxyproline mark.

The protein belongs to the conotoxin M superfamily. As to expression, expressed by the venom duct.

The protein resides in the secreted. This chain is Conotoxin TsMMSK-011, found in Conus tessulatus (Tessellate cone).